The chain runs to 539 residues: Alpha-copaene synthase (539 aa).

Asp290 and Asp294 together coordinate Mg(2+). Residues Asp290, Asp294, and Arg432 each contribute to the substrate site. Residues 290–294 (DDTFD) carry the DDXXD motif motif.

This sequence belongs to the terpene synthase family. In terms of assembly, monomer. Mg(2+) serves as cofactor. Requires Mn(2+) as cofactor.

The protein resides in the cytoplasm. It catalyses the reaction (2E,6E)-farnesyl diphosphate = alpha-copaene + diphosphate. The enzyme catalyses (2E,6E)-farnesyl diphosphate = (+)-germacrene D + diphosphate. The catalysed reaction is (2E,6E)-farnesyl diphosphate = (-)-(E)-beta-caryophyllene + diphosphate. It carries out the reaction (2E,6E)-farnesyl diphosphate = delta-cadinene + diphosphate. Its pathway is secondary metabolite biosynthesis; terpenoid biosynthesis. In terms of biological role, converts farnesyl diphosphate to the bicyclic olefins alpha-copaene, (E)-beta-caryophyllene, and to the macrocyclic sesquiterpene germacrene D. Also mediates the biosynthesis of minor sesquiterpene hydrocarbons including delta-cadinene. Involved in indirect defense by producing volatile signals attracting natural enemies of herbivores. The protein is Alpha-copaene synthase of Zea mays (Maize).